A 605-amino-acid chain; its full sequence is Anaerobic ribonucleoside-triphosphate reductase (605 aa).

His-64 and His-66 together coordinate dCTP. Positions 64, 66, 67, 100, and 103 each coordinate dGTP. Residues Glu-100, Lys-103, Gln-114, Lys-146, and Ala-445–Leu-448 contribute to the dCTP site. Residues Glu-100, Lys-103, Gln-114, and Lys-146 each contribute to the dATP site. Glu-100 serves as a coordination point for dTTP. DTTP-binding residues include Gln-114 and Lys-146. DGTP contacts are provided by Lys-146, Asn-447, and Leu-448. The 124-residue stretch at Glu-482–Gln-605 folds into the Glycine radical domain. Cys-543, Cys-546, Cys-561, and Cys-564 together coordinate Zn(2+). Gly-580 bears the Glycine radical mark.

The protein belongs to the anaerobic ribonucleoside-triphosphate reductase family. Homodimer. Forms a tetramer composed of two NrdD and two NrdG subunits.

It catalyses the reaction a ribonucleoside 5'-triphosphate + formate + H(+) = a 2'-deoxyribonucleoside 5'-triphosphate + CO2 + H2O. Its activity is regulated as follows. Activated under anaerobic conditions by NrdG, a tightly associated activase. Activation involves the formation of a glycyl radical at Gly-580. In terms of biological role, catalyzes the conversion of ribonucleotides into deoxyribonucleotides, which are required for DNA synthesis and repair. This chain is Anaerobic ribonucleoside-triphosphate reductase, found in Enterobacteria phage T4 (Bacteriophage T4).